A 169-amino-acid polypeptide reads, in one-letter code: UPF0065 protein in clcB-clcD intergenic region (169 aa).

The protein belongs to the UPF0065 (bug) family.

Its subcellular location is the periplasm. This chain is UPF0065 protein in clcB-clcD intergenic region, found in Pseudomonas knackmussii (strain DSM 6978 / CCUG 54928 / LMG 23759 / B13).